The sequence spans 456 residues: Hydroxymethylglutaryl-CoA synthase ERG13 (456 aa).

Ala35 is a binding site for (3S)-3-hydroxy-3-methylglutaryl-CoA. The Proton donor/acceptor role is filled by Glu86. Positions 118, 156, 160, 210, 259, 268, 336, and 370 each coordinate (3S)-3-hydroxy-3-methylglutaryl-CoA. The active-site Acyl-thioester intermediate is the Cys118. The active-site Proton donor/acceptor is His259.

The protein belongs to the thiolase-like superfamily. HMG-CoA synthase family.

The catalysed reaction is acetoacetyl-CoA + acetyl-CoA + H2O = (3S)-3-hydroxy-3-methylglutaryl-CoA + CoA + H(+). Its pathway is metabolic intermediate biosynthesis; (R)-mevalonate biosynthesis; (R)-mevalonate from acetyl-CoA: step 2/3. Its function is as follows. Hydroxymethylglutaryl-CoA synthase; part of the first module of ergosterol biosynthesis pathway that includes the early steps of the pathway, conserved across all eukaryotes, and which results in the formation of mevalonate from acetyl-coenzyme A (acetyl-CoA). ERG13 condenses acetyl-CoA with acetoacetyl-CoA to form hydroxymethylglutaryl-CoA (HMG-CoA). The first module starts with the action of the cytosolic acetyl-CoA acetyltransferase ERG10B that catalyzes the formation of acetoacetyl-CoA. The hydroxymethylglutaryl-CoA synthases ERG13 then condenses acetyl-CoA with acetoacetyl-CoA to form HMG-CoA. The rate-limiting step of the early module is the reduction to mevalonate by the 3-hydroxy-3-methylglutaryl-coenzyme A (HMG-CoA) reductases HMG1. The protein is Hydroxymethylglutaryl-CoA synthase ERG13 of Gibberella zeae (strain ATCC MYA-4620 / CBS 123657 / FGSC 9075 / NRRL 31084 / PH-1) (Wheat head blight fungus).